Here is a 2181-residue protein sequence, read N- to C-terminus: Non-reducing polyketide synthase dpmaA (2181 aa).

Residues 74–180 (QWVKGNSTQP…LALCCGAYID (107 aa)) form an N-terminal acylcarrier protein transacylase domain (SAT) region. One can recognise a Ketosynthase family 3 (KS3) domain in the interval 347 to 779 (QAQLLVLGPV…GTNAAMLVCQ (433 aa)). Active-site for beta-ketoacyl synthase activity residues include C525, H661, and H702. The interval 891–1193 (VLAGQTGRRV…SFYPAALGEP (303 aa)) is malonyl-CoA:ACP transacylase (MAT) domain. S977 functions as the For acyl/malonyl transferase activity in the catalytic mechanism. The N-terminal hotdog fold stretch occupies residues 1269–1401 (VSLIGKTQNA…GVITLQEVYS (133 aa)). Residues 1269–1579 (VSLIGKTQNA…FQKIAISSLK (311 aa)) form the PKS/mFAS DH domain. Residues 1276 to 1573 (QNAGVQTVEY…TILGAKFQKI (298 aa)) are product template (PT) domain. A C-terminal hotdog fold region spans residues 1425 to 1579 (SASVVQGDFI…FQKIAISSLK (155 aa)). Over residues 1587–1603 (GVPQTSGGRTPSSSITE) the composition is skewed to polar residues. Disordered regions lie at residues 1587 to 1618 (GVPQTSGGRTPSSSITEFISGDDASPCPPIPG) and 1652 to 1675 (ISGSSRSTSSSPPSLESRSQAMET). Residues 1653 to 1670 (SGSSRSTSSSPPSLESRS) are compositionally biased toward low complexity. A Carrier domain is found at 1677 to 1753 (EITEGAGSAL…TLFHTIFPQQ (77 aa)). S1713 carries the O-(pantetheine 4'-phosphoryl)serine modification. The interval 1982–2164 (EFMNCLFSYN…QSGFDHIDWT (183 aa)) is methyltransferase (CMeT) domain.

The protein operates within secondary metabolite biosynthesis; terpenoid biosynthesis. In terms of biological role, non-reducing polyketide synthase; part of the gene cluster that mediates the biosynthesis of the diterpenoid pyrones subglutinols A and B. The first step of the pathway is the synthesis of the alpha-pyrone moiety by the polyketide synthase dpmaA via condensation of one acetyl-CoA starter unit with 3 malonyl-CoA units and 2 methylations. The alpha-pyrone is then combined with geranylgeranyl pyrophosphate (GGPP) formed by the GGPP synthase dpmaD through the action of the prenyltransferase dpmaC to yield a linear alpha-pyrone diterpenoid. Subsequent steps in the diterpenoid pyrone biosynthetic pathway involve the decalin core formation, which is initiated by the epoxidation of the C10-C11 olefin by the FAD-dependent oxidoreductase dpmaE, and is followed by a cyclization cascade catalyzed by the terpene cyclase dpmaB. The dehydrogenase dpmaF is then involved in tetrahydrofuran (THF) ring formation at the C5 unit to complete the formation of subglutinols A and B. This Metarhizium anisopliae (Entomophthora anisopliae) protein is Non-reducing polyketide synthase dpmaA.